Reading from the N-terminus, the 316-residue chain is Pantothenate kinase (316 aa).

95–102 (GSVAVGKS) serves as a coordination point for ATP.

The protein belongs to the prokaryotic pantothenate kinase family.

It is found in the cytoplasm. The enzyme catalyses (R)-pantothenate + ATP = (R)-4'-phosphopantothenate + ADP + H(+). It functions in the pathway cofactor biosynthesis; coenzyme A biosynthesis; CoA from (R)-pantothenate: step 1/5. This chain is Pantothenate kinase, found in Shewanella loihica (strain ATCC BAA-1088 / PV-4).